We begin with the raw amino-acid sequence, 258 residues long: MSSTLSNEESGLGDSNRSTEVDGGDGGNFTAYESRFQSQRFDSSFSNFDSQPEKESDLPCGDSSPRPETQSPPSINSFDDTNDSILPPPSAMEKEEGFALREWRRLNALRLEEKEKEEKEMVQQILEAAEQYKAEFYSKRNVTIENNKKLNREKEKFFLENQEKFYAEADKNNWKAIAELIPREVPVIENRGNKKKTATITVIQGPKPGKPTDLSRMRQVLTKLKHNPPTHMKPKLPSPSGADPNVSVSEQVTVTEKL.

A compositionally biased stretch (polar residues) spans 1 to 18 (MSSTLSNEESGLGDSNRS). The interval 1-96 (MSSTLSNEES…PPPSAMEKEE (96 aa)) is disordered. Ser-2 bears the N-acetylserine mark. Over residues 34–50 (SRFQSQRFDSSFSNFDS) the composition is skewed to low complexity. Positions 66-79 (RPETQSPPSINSFD) are enriched in polar residues. The interval 90-152 (SAMEKEEGFA…TIENNKKLNR (63 aa)) is involved in binding clathrin heavy chain. Positions 105-164 (RLNALRLEEKEKEEKEMVQQILEAAEQYKAEFYSKRNVTIENNKKLNREKEKFFLENQEK) form a coiled coil. Basic residues predominate over residues 224–234 (LKHNPPTHMKP). A disordered region spans residues 224 to 258 (LKHNPPTHMKPKLPSPSGADPNVSVSEQVTVTEKL). The span at 246–258 (VSVSEQVTVTEKL) shows a compositional bias: polar residues.

This sequence belongs to the clathrin light chain family. Clathrin coats are formed from molecules containing 3 heavy chains and 3 light chains.

Its subcellular location is the cytoplasmic vesicle membrane. The protein resides in the membrane. It localises to the coated pit. Functionally, clathrin is the major protein of the polyhedral coat of coated pits and vesicles. The polypeptide is Clathrin light chain 3 (Arabidopsis thaliana (Mouse-ear cress)).